Here is a 71-residue protein sequence, read N- to C-terminus: Large ribosomal subunit protein bL31 (71 aa).

Residues C16, C18, C38, and C41 each contribute to the Zn(2+) site.

It belongs to the bacterial ribosomal protein bL31 family. Type A subfamily. Part of the 50S ribosomal subunit. It depends on Zn(2+) as a cofactor.

Its function is as follows. Binds the 23S rRNA. The polypeptide is Large ribosomal subunit protein bL31 (Neisseria gonorrhoeae (strain ATCC 700825 / FA 1090)).